The following is a 119-amino-acid chain: Immunoglobulin heavy variable 3-73 (119 aa).

An N-terminal signal peptide occupies residues 1-19 (MEFGLSWVFLVAILKGVQC). The tract at residues 20-44 (EVQLVESGGGLVQPGGSLKLSCAAS) is framework-1. The Ig-like domain maps to 20-119 (EVQLVESGGG…EDTAVYYCTR (100 aa)). Cys-41 and Cys-117 are disulfide-bonded. The complementarity-determining-1 stretch occupies residues 45-52 (GFTFSGSA). A framework-2 region spans residues 53-69 (MHWVRQASGKGLEWVGR). Positions 70–79 (IRSKANSYAT) are complementarity-determining-2. The segment at 80-117 (AYAASVKGRFTISRDDSKNTAYLQMNSLKTEDTAVYYC) is framework-3. Positions 118 to 119 (TR) are complementarity-determining-3.

In terms of assembly, immunoglobulins are composed of two identical heavy chains and two identical light chains; disulfide-linked.

It localises to the secreted. The protein resides in the cell membrane. Its function is as follows. V region of the variable domain of immunoglobulin heavy chains that participates in the antigen recognition. Immunoglobulins, also known as antibodies, are membrane-bound or secreted glycoproteins produced by B lymphocytes. In the recognition phase of humoral immunity, the membrane-bound immunoglobulins serve as receptors which, upon binding of a specific antigen, trigger the clonal expansion and differentiation of B lymphocytes into immunoglobulins-secreting plasma cells. Secreted immunoglobulins mediate the effector phase of humoral immunity, which results in the elimination of bound antigens. The antigen binding site is formed by the variable domain of one heavy chain, together with that of its associated light chain. Thus, each immunoglobulin has two antigen binding sites with remarkable affinity for a particular antigen. The variable domains are assembled by a process called V-(D)-J rearrangement and can then be subjected to somatic hypermutations which, after exposure to antigen and selection, allow affinity maturation for a particular antigen. The sequence is that of Immunoglobulin heavy variable 3-73 from Homo sapiens (Human).